A 229-amino-acid chain; its full sequence is Ribosomal RNA small subunit methyltransferase G (229 aa).

Residues Gly-87, Leu-92, 138–139, and Arg-154 contribute to the S-adenosyl-L-methionine site; that span reads VE.

It belongs to the methyltransferase superfamily. RNA methyltransferase RsmG family.

Its subcellular location is the cytoplasm. It carries out the reaction guanosine(527) in 16S rRNA + S-adenosyl-L-methionine = N(7)-methylguanosine(527) in 16S rRNA + S-adenosyl-L-homocysteine. Specifically methylates the N7 position of guanine in position 527 of 16S rRNA. This is Ribosomal RNA small subunit methyltransferase G from Oleidesulfovibrio alaskensis (strain ATCC BAA-1058 / DSM 17464 / G20) (Desulfovibrio alaskensis).